A 379-amino-acid polypeptide reads, in one-letter code: Putative phosphatidate phosphatase (379 aa).

Positions 1–53 (MPAVKIIMSTETSASETTPLRRSENETPDHKELAQSNSNSRQTTVNSNNNNYS) are disordered. Residues 9 to 18 (STETSASETT) are compositionally biased toward polar residues. Over residues 19-33 (PLRRSENETPDHKEL) the composition is skewed to basic and acidic residues. Over residues 35–53 (QSNSNSRQTTVNSNNNNYS) the composition is skewed to low complexity. The N-linked (GlcNAc...) asparagine glycan is linked to Asn51. The next 2 membrane-spanning stretches (helical) occupy residues 90 to 110 (VGLD…FFLL) and 138 to 158 (MLYF…EVII). Residue Asn169 is glycosylated (N-linked (GlcNAc...) asparagine). Helical transmembrane passes span 266-286 (SFPS…ALYL) and 330-350 (AGSL…SDLF).

The protein belongs to the PA-phosphatase related phosphoesterase family. As to quaternary structure, homodimer. This complex seems not to be involved in substrate recognition, it may confer only structural or functional stability. As to expression, expressed in embryonic gut in a pattern that guides germ cells towards mesoderm (initially in hindgut and then on lower side of gut). During extended germ band stage, expressed in ectoderm as a medial band throughout the trunk.

The protein localises to the membrane. It catalyses the reaction a 1,2-diacyl-sn-glycero-3-phosphate + H2O = a 1,2-diacyl-sn-glycerol + phosphate. Its function is as follows. Responsible for guiding the germ cells early in the process of migration from the lumen of the developing gut towards the overlying mesoderm, where the germ cells enter the gonads. May be involved in lipid metabolism. The sequence is that of Putative phosphatidate phosphatase (wun) from Drosophila melanogaster (Fruit fly).